Here is a 280-residue protein sequence, read N- to C-terminus: Beta-lactamase OXA-58 (280 aa).

Residues 1-18 (MKLLKILSLVCLSISIGA) form the signal peptide. A lipid anchor (N-palmitoyl cysteine) is attached at Cys19. Cys19 carries S-diacylglycerol cysteine lipidation. Ser83 acts as the Acyl-ester intermediate in catalysis. A beta-lactam-binding residues include Ser83, Lys86, Ser130, Ser221, Trp223, and Arg263. Lys86 is modified (N6-carboxylysine).

Belongs to the class-D beta-lactamase family. Monomer. Dimer. In terms of processing, carboxylated on the epsilon-amino group of a lysine, with the resulting carbamate functional group serving as a general base. Probably N-carboxylated at Lys-86 at neutral pH in vivo and undergoes complete N-decarboxylation, at pH 4.1, in vitro. N-carboxylation at Lys-86 probably increases catalytic activity under physiological conditions.

It is found in the cell membrane. It carries out the reaction a beta-lactam + H2O = a substituted beta-amino acid. Activated approximately 3-fold by the presence of 0.1M NaHCO3. In terms of biological role, class D beta-lactamase which confers resistance to the beta-lactam antibiotics, including penicillins and oxacillin, and moderate resistance to carbapenems such as imipenem; in the DH10B strain of E.coli. Acts via hydrolysis of the beta-lactam ring. Has benzylpenicillin-, oxacillin-, cephalothin- and imipenem-hydrolyzing activities. The polypeptide is Beta-lactamase OXA-58 (Acinetobacter baumannii).